The following is a 211-amino-acid chain: Calcipressin-like protein (211 aa).

Residues S113 and S117 each carry the phosphoserine modification. The residue at position 182 (T182) is a Phosphothreonine.

This sequence belongs to the RCAN family.

Functionally, inhibits calcineurin-dependent transcriptional responses by binding to the catalytic domain of calcineurin. The polypeptide is Calcipressin-like protein (RCN1) (Saccharomyces cerevisiae (strain ATCC 204508 / S288c) (Baker's yeast)).